A 263-amino-acid chain; its full sequence is 4-hydroxy-tetrahydrodipicolinate reductase (263 aa).

NAD(+) is bound by residues 7–12, 96–98, and 122–125; these read GFKGRM, GTT, and APNF. Catalysis depends on histidine 152, which acts as the Proton donor/acceptor. Histidine 153 lines the (S)-2,3,4,5-tetrahydrodipicolinate pocket. Residue lysine 156 is the Proton donor of the active site. 162-163 is a binding site for (S)-2,3,4,5-tetrahydrodipicolinate; it reads GT.

This sequence belongs to the DapB family.

It localises to the cytoplasm. The enzyme catalyses (S)-2,3,4,5-tetrahydrodipicolinate + NAD(+) + H2O = (2S,4S)-4-hydroxy-2,3,4,5-tetrahydrodipicolinate + NADH + H(+). It carries out the reaction (S)-2,3,4,5-tetrahydrodipicolinate + NADP(+) + H2O = (2S,4S)-4-hydroxy-2,3,4,5-tetrahydrodipicolinate + NADPH + H(+). Its pathway is amino-acid biosynthesis; L-lysine biosynthesis via DAP pathway; (S)-tetrahydrodipicolinate from L-aspartate: step 4/4. Its function is as follows. Catalyzes the conversion of 4-hydroxy-tetrahydrodipicolinate (HTPA) to tetrahydrodipicolinate. In Listeria welshimeri serovar 6b (strain ATCC 35897 / DSM 20650 / CCUG 15529 / CIP 8149 / NCTC 11857 / SLCC 5334 / V8), this protein is 4-hydroxy-tetrahydrodipicolinate reductase.